We begin with the raw amino-acid sequence, 215 residues long: Octanoyltransferase (215 aa).

The region spanning 31 to 206 (TDAPDEVWLV…QLVKHLDYAE (176 aa)) is the BPL/LPL catalytic domain. Residues 70 to 77 (RGGQVTYH), 137 to 139 (SLG), and 150 to 152 (GLA) each bind substrate. Cys-168 (acyl-thioester intermediate) is an active-site residue.

Belongs to the LipB family.

The protein localises to the cytoplasm. It carries out the reaction octanoyl-[ACP] + L-lysyl-[protein] = N(6)-octanoyl-L-lysyl-[protein] + holo-[ACP] + H(+). It participates in protein modification; protein lipoylation via endogenous pathway; protein N(6)-(lipoyl)lysine from octanoyl-[acyl-carrier-protein]: step 1/2. Catalyzes the transfer of endogenously produced octanoic acid from octanoyl-acyl-carrier-protein onto the lipoyl domains of lipoate-dependent enzymes. Lipoyl-ACP can also act as a substrate although octanoyl-ACP is likely to be the physiological substrate. The protein is Octanoyltransferase of Pseudomonas fluorescens (strain ATCC BAA-477 / NRRL B-23932 / Pf-5).